We begin with the raw amino-acid sequence, 659 residues long: Threonine--tRNA ligase (659 aa).

The region spanning 1-60 (MTVYLPDGKPLELPEGATAKDVARALGEGWERRAVGAIVDGELYDLLKPLPQGAKVRLLT) is the TGS domain. 2 catalytic regions span residues 234-548 (TAEE…EHFA) and 252-552 (DHRR…GDFP). Zn(2+) is bound by residues cysteine 349, histidine 400, and histidine 529.

The protein belongs to the class-II aminoacyl-tRNA synthetase family. In terms of assembly, homodimer. Requires Zn(2+) as cofactor.

Its subcellular location is the cytoplasm. It catalyses the reaction tRNA(Thr) + L-threonine + ATP = L-threonyl-tRNA(Thr) + AMP + diphosphate + H(+). In terms of biological role, catalyzes the attachment of threonine to tRNA(Thr) in a two-step reaction: L-threonine is first activated by ATP to form Thr-AMP and then transferred to the acceptor end of tRNA(Thr). Also edits incorrectly charged L-seryl-tRNA(Thr). This Thermus thermophilus (strain ATCC 27634 / DSM 579 / HB8) protein is Threonine--tRNA ligase.